We begin with the raw amino-acid sequence, 340 residues long: Annexin A2-B (340 aa).

Positions 2–25 are P10 binding site; the sequence is ALIHEILGKLSLEGNQSSSRQSKL. Ser27 bears the Phosphoserine; by PKC mark. Annexin repeat units lie at residues 34 to 105, 106 to 177, 190 to 262, and 266 to 337; these read FDAE…GLIK, TRPQ…ALAK, EKID…NLVQ, and NKPL…NLCG.

It belongs to the annexin family. In terms of assembly, tetramer of 2 light chains (p10 proteins) and 2 heavy chains (p36 proteins). In terms of tissue distribution, adult brain, heart, striated muscle, liver, kidney, and very high levels in skin.

It localises to the secreted. It is found in the extracellular space. The protein resides in the extracellular matrix. Its subcellular location is the basement membrane. Its function is as follows. Calcium-regulated membrane-binding protein whose affinity for calcium is greatly enhanced by anionic phospholipids. It binds two calcium ions with high affinity. This chain is Annexin A2-B (anxa2-b), found in Xenopus laevis (African clawed frog).